Reading from the N-terminus, the 388-residue chain is Cytochrome b (388 aa).

The next 4 helical transmembrane spans lie at 38–58 (FGCLAGICLVIQIVTGVFLAM), 82–104 (WLLRYMHANGASMFLIVVHLHIF), 119–139 (VWCLGVVIFLLMIVTAFIGYV), and 185–205 (FFSLHHLLPLILAGASLLHLA). Residues His-88 and His-102 each contribute to the heme b site. Heme b contacts are provided by His-189 and His-203. His-208 lines the a ubiquinone pocket. A run of 4 helical transmembrane segments spans residues 231–251 (FYVKDLVGRVASAIFFSIWIF), 295–315 (AGGVAAIAPVFISLLALPFFK), 327–347 (IHQGIFWLLLADCLLLGWIGC), and 354–373 (FVTIGQISSFFFFLFFAITP).

This sequence belongs to the cytochrome b family. In terms of assembly, the main subunits of complex b-c1 are: cytochrome b, cytochrome c1 and the Rieske protein. Requires heme b as cofactor.

The protein resides in the mitochondrion inner membrane. Component of the ubiquinol-cytochrome c reductase complex (complex III or cytochrome b-c1 complex) that is part of the mitochondrial respiratory chain. The b-c1 complex mediates electron transfer from ubiquinol to cytochrome c. Contributes to the generation of a proton gradient across the mitochondrial membrane that is then used for ATP synthesis. The protein is Cytochrome b (MT-CYB) of Zea mays (Maize).